A 289-amino-acid polypeptide reads, in one-letter code: 2-dehydro-3-deoxyphosphooctonate aldolase (289 aa).

Belongs to the KdsA family.

The protein resides in the cytoplasm. It catalyses the reaction D-arabinose 5-phosphate + phosphoenolpyruvate + H2O = 3-deoxy-alpha-D-manno-2-octulosonate-8-phosphate + phosphate. Its pathway is carbohydrate biosynthesis; 3-deoxy-D-manno-octulosonate biosynthesis; 3-deoxy-D-manno-octulosonate from D-ribulose 5-phosphate: step 2/3. It functions in the pathway bacterial outer membrane biogenesis; lipopolysaccharide biosynthesis. In Cupriavidus taiwanensis (strain DSM 17343 / BCRC 17206 / CCUG 44338 / CIP 107171 / LMG 19424 / R1) (Ralstonia taiwanensis (strain LMG 19424)), this protein is 2-dehydro-3-deoxyphosphooctonate aldolase.